A 457-amino-acid polypeptide reads, in one-letter code: UDP-N-acetylmuramoyl-tripeptide--D-alanyl-D-alanine ligase (457 aa).

109–115 (GSSGKTT) is a binding site for ATP.

The protein belongs to the MurCDEF family. MurF subfamily.

It is found in the cytoplasm. The catalysed reaction is D-alanyl-D-alanine + UDP-N-acetyl-alpha-D-muramoyl-L-alanyl-gamma-D-glutamyl-meso-2,6-diaminopimelate + ATP = UDP-N-acetyl-alpha-D-muramoyl-L-alanyl-gamma-D-glutamyl-meso-2,6-diaminopimeloyl-D-alanyl-D-alanine + ADP + phosphate + H(+). It participates in cell wall biogenesis; peptidoglycan biosynthesis. Functionally, involved in cell wall formation. Catalyzes the final step in the synthesis of UDP-N-acetylmuramoyl-pentapeptide, the precursor of murein. The polypeptide is UDP-N-acetylmuramoyl-tripeptide--D-alanyl-D-alanine ligase (Haemophilus influenzae (strain ATCC 51907 / DSM 11121 / KW20 / Rd)).